The primary structure comprises 837 residues: Protein translocase subunit SecA 1 (837 aa).

ATP-binding positions include glutamine 85, 103–107 (GEGKT), and aspartate 492. The segment at 791 to 837 (KGEAINPAEGKPEAKRQPIRKDQHIGRNDPCPCGSGKKYKNCHGKEA) is disordered. A compositionally biased stretch (basic and acidic residues) spans 800-817 (GKPEAKRQPIRKDQHIGR). 4 residues coordinate Zn(2+): cysteine 821, cysteine 823, cysteine 832, and histidine 833. Positions 827-837 (KKYKNCHGKEA) are enriched in basic residues.

This sequence belongs to the SecA family. As to quaternary structure, monomer and homodimer. Part of the essential Sec protein translocation apparatus which comprises SecA, SecYEG and auxiliary proteins SecDF. Other proteins may also be involved. The cofactor is Zn(2+).

The protein localises to the cell membrane. It is found in the cytoplasm. The catalysed reaction is ATP + H2O + cellular proteinSide 1 = ADP + phosphate + cellular proteinSide 2.. In terms of biological role, part of the Sec protein translocase complex. Interacts with the SecYEG preprotein conducting channel. Has a central role in coupling the hydrolysis of ATP to the transfer of proteins into and across the cell membrane, serving as an ATP-driven molecular motor driving the stepwise translocation of polypeptide chains across the membrane. The chain is Protein translocase subunit SecA 1 from Listeria monocytogenes serovar 1/2a (strain ATCC BAA-679 / EGD-e).